Consider the following 331-residue polypeptide: tRNA (guanine-N(7)-)-methyltransferase (331 aa).

Glu29, Glu55, and Asp105 together coordinate S-adenosyl-L-methionine. Residue Asp105 is part of the active site. Substrate contacts are provided by Lys109 and Asp141.

The protein belongs to the class I-like SAM-binding methyltransferase superfamily. TrmB family.

It catalyses the reaction guanosine(46) in tRNA + S-adenosyl-L-methionine = N(7)-methylguanosine(46) in tRNA + S-adenosyl-L-homocysteine. It participates in tRNA modification; N(7)-methylguanine-tRNA biosynthesis. Catalyzes the formation of N(7)-methylguanine at position 46 (m7G46) in tRNA. The protein is tRNA (guanine-N(7)-)-methyltransferase of Deinococcus geothermalis (strain DSM 11300 / CIP 105573 / AG-3a).